Consider the following 49-residue polypeptide: Large ribosomal subunit protein bL33B (49 aa).

It belongs to the bacterial ribosomal protein bL33 family.

This is Large ribosomal subunit protein bL33B from Geobacillus kaustophilus (strain HTA426).